We begin with the raw amino-acid sequence, 429 residues long: Adenylosuccinate synthetase (429 aa).

GTP contacts are provided by residues 12–18 and 40–42; these read GDEGKGK and GHT. The active-site Proton acceptor is aspartate 13. The Mg(2+) site is built by aspartate 13 and glycine 40. IMP contacts are provided by residues 13 to 16, 38 to 41, threonine 128, arginine 142, glutamine 223, threonine 238, and arginine 302; these read DEGK and NAGH. Catalysis depends on histidine 41, which acts as the Proton donor. A substrate-binding site is contributed by 298–304; that stretch reads TTTGRPR. GTP is bound by residues arginine 304, 330-332, and 412-414; these read SID and SVG.

The protein belongs to the adenylosuccinate synthetase family. Homodimer. Mg(2+) is required as a cofactor.

The protein localises to the cytoplasm. It carries out the reaction IMP + L-aspartate + GTP = N(6)-(1,2-dicarboxyethyl)-AMP + GDP + phosphate + 2 H(+). It participates in purine metabolism; AMP biosynthesis via de novo pathway; AMP from IMP: step 1/2. Plays an important role in the de novo pathway of purine nucleotide biosynthesis. Catalyzes the first committed step in the biosynthesis of AMP from IMP. This is Adenylosuccinate synthetase from Bacillus cereus (strain ATCC 10987 / NRS 248).